The sequence spans 853 residues: DNA topoisomerase 1 (853 aa).

Residues 3–136 (KSLVIVESPV…KFRRVVFNEI (134 aa)) form the Toprim domain. Glu9 and Asp105 together coordinate Mg(2+). The region spanning 152–565 (NMNRVYSQQA…SFFDNFSQQL (414 aa)) is the Topo IA-type catalytic domain. The tract at residues 186–191 (SAGRVQ) is interaction with DNA. The active-site O-(5'-phospho-DNA)-tyrosine intermediate is Tyr313. 3 consecutive C4-type zinc fingers follow at residues 589–621 (CSLC…EKRC), 649–676 (CKKC…NPSC), and 699–724 (CEKC…NDTC).

The protein belongs to the type IA topoisomerase family. In terms of assembly, monomer. Requires Mg(2+) as cofactor.

It catalyses the reaction ATP-independent breakage of single-stranded DNA, followed by passage and rejoining.. Functionally, releases the supercoiling and torsional tension of DNA, which is introduced during the DNA replication and transcription, by transiently cleaving and rejoining one strand of the DNA duplex. Introduces a single-strand break via transesterification at a target site in duplex DNA. The scissile phosphodiester is attacked by the catalytic tyrosine of the enzyme, resulting in the formation of a DNA-(5'-phosphotyrosyl)-enzyme intermediate and the expulsion of a 3'-OH DNA strand. The free DNA strand then undergoes passage around the unbroken strand, thus removing DNA supercoils. Finally, in the religation step, the DNA 3'-OH attacks the covalent intermediate to expel the active-site tyrosine and restore the DNA phosphodiester backbone. The chain is DNA topoisomerase 1 from Buchnera aphidicola subsp. Schizaphis graminum (strain Sg).